Reading from the N-terminus, the 476-residue chain is MGLKKMKGLSYDEAFAMANDPLEGFHEVNLASPTSPDLLGVYESGTQEQTTSPSVIYRPHPSALSSVPIQANALDVSELPTQPVYSSPRRLNCAEISSISFHVTDPAPCSTSGVTAGLTKLTTRKDNYNAEREFLQGATITEACDGSDDIFGLSTDSLSRLRSPSVLEVREKGYERLKEELAKAQRELKLKDEECERLSKVRDQLGQELEELTASLFEEAHKMVREANIKQATAEKQLKEAQGKIDVLQAEVAALKTLVLSSSPTSPTQEPLPGGKTPFKKGHTRNKSTSSAMSGSHQDLSVIQPIVKDCKEADLSLYNEFRLWKDEPTMDRTCPFLDKIYQEDIFPCLTFSKSELASAVLEAVENNTLSIEPVGLQPIRFVKASAVECGGPKKCALTGQSKSCKHRIKLGDSSNYYYISPFCRYRITSVCNFFTYIRYIQQGLVKQQDVDQMFWEVMQLRKEMSLAKLGYFKEEL.

Ser-163 and Ser-165 each carry phosphoserine; by PKB/AKT1. A coiled-coil region spans residues 165–260 (SVLEVREKGY…EVAALKTLVL (96 aa)). The segment at 262 to 297 (SSPTSPTQEPLPGGKTPFKKGHTRNKSTSSAMSGSH) is disordered. 4 positions are modified to phosphoserine: Ser-263, Ser-266, Ser-288, and Ser-296. The segment covering 287 to 297 (KSTSSAMSGSH) has biased composition (polar residues). The important for RAB11A binding stretch occupies residues 435–444 (TYIRYIQQGL).

Belongs to the SEC2 family. Homodimer. Interacts with the N-terminal region of SSX2. Interacts with the GDP-bound forms of RAB8A and RAB8B. The interaction with RAB8A is prevented by phosphorylation of RAB8A at 'Thr-72'. Interacts with the GDP-bound forms of RAB3A and RAB3D. Interacts with DCDC1. Interacts (via the N-terminal region) with TRAPPC14; this interaction mediates RAB3IP association with the TRAPP II complex. Forms a heterotetramer with RAB11A where RAB3IP homodimer binds two RAB11A subunits. Forms a complex with RAB11A and RAB11FIP3, probably a heterohexamer with two of each protein subunit, where Rabin8/RAB3IP and RAB11FIP3 simultaneously bind to RAB11A; the complex promotes preciliary trafficking. Forms a complex containing RAB11A, ASAP1, RAB3IP, RAP11FIP3 and ARF4; the complex promotes preciliary trafficking; the complex binds to RHO in photoreceptor cells and promotes RHO ciliary transport. Post-translationally, phosphorylated by AKT1; the phosphorylation alters its GEF activity. Expressed in brain, kidney, heart, pancreas and placenta. Not detected in skeletal muscle or liver.

It is found in the cytoplasm. The protein resides in the nucleus. Its subcellular location is the cytoskeleton. It localises to the cell projection. The protein localises to the lamellipodium. It is found in the vesicle. The protein resides in the microtubule organizing center. Its subcellular location is the centrosome. Its activity is regulated as follows. Phosphorylation by ATK1 alters its GEF activity. Complex formation with RAB11A and RAB11FIP3 and ciliogenesis function are competitively inhibited by RAB11A-WDR44 interaction. Functionally, guanine nucleotide exchange factor (GEF) which may activate RAB8A and RAB8B. Promotes the exchange of GDP to GTP, converting inactive GDP-bound Rab proteins into their active GTP-bound form. Mediates the release of GDP from RAB8A and RAB8B but not from RAB3A or RAB5. Modulates actin organization and promotes polarized transport of RAB8A-specific vesicles to the cell surface. Together with RAB11A, RAB8A, the exocyst complex, PARD3, PRKCI, ANXA2, CDC42 and DNMBP promotes transcytosis of PODXL to the apical membrane initiation sites (AMIS), apical surface formation and lumenogenesis. Part of the ciliary targeting complex containing Rab11, ASAP1, RAB3IP and RAB11FIP3 and ARF4 that promotes RAB3IP preciliary vesicle trafficking to mother centriole and ciliogenesis initiation. The protein is Rab-3A-interacting protein of Homo sapiens (Human).